Here is a 365-residue protein sequence, read N- to C-terminus: Growth-regulating factor 7 (365 aa).

The 36-residue stretch at 59–94 folds into the QLQ domain; sequence PFTNAQLKELERQAMIYKYMIASIPVPFDLLVSSPS. The region spanning 107–151 is the WRC domain; the sequence is DLEPGRCRRTDGKKWRCAKEVVSNHKYCEKHLHRGRPRSRKHVEP. 2 short sequence motifs (bipartite nuclear localization signal) span residues 112-122 and 140-147; these read RCRRTDGKKWR and RGRPRSRK. The segment covering 137–147 has biased composition (basic residues); it reads HLHRGRPRSRK. 2 disordered regions span residues 137–187 and 332–365; these read HLHR…TLEP and IESY…SSQV. The segment covering 337–365 has biased composition (polar residues); sequence LMETPTPSSSPSRVMKKMTSSVSDESSQV.

This sequence belongs to the GRF family.

The protein localises to the nucleus. In terms of biological role, transcription activator that plays a role in the regulation of cell expansion in leaf and cotyledons tissues. Component of a network formed by miR396, the GRFs and their interacting factors (GIFs) acting in the regulation of meristem function, at least partially through the control of cell proliferation. The chain is Growth-regulating factor 7 (GRF7) from Arabidopsis thaliana (Mouse-ear cress).